We begin with the raw amino-acid sequence, 593 residues long: ATP-dependent RNA helicase MRH4, mitochondrial (593 aa).

Residues 1–36 constitute a mitochondrion transit peptide; it reads MTLKIGGIVPIVRVMRDTIIQRPVSTFVRYHSKRSR. Positions 132–139 match the Q motif motif; that stretch reads EIKPSPVQ. The Helicase ATP-binding domain maps to 177 to 399; that stretch reads SNEMNRLKIF…GKMFPDEFSI (223 aa). Residue 190–197 participates in ATP binding; the sequence is AETGSGKT. The DEAD box signature appears at 347–350; that stretch reads DEAD. Residues 433 to 593 form the Helicase C-terminal domain; that stretch reads CLAQALYAIH…KVIKKGIPLG (161 aa).

This sequence belongs to the DEAD box helicase family. MRH4 subfamily.

The protein localises to the mitochondrion. The enzyme catalyses ATP + H2O = ADP + phosphate + H(+). Functionally, ATP-binding RNA helicase involved in mitochondrial RNA metabolism. Required for maintenance of mitochondrial DNA. The polypeptide is ATP-dependent RNA helicase MRH4, mitochondrial (MRH4) (Debaryomyces hansenii (strain ATCC 36239 / CBS 767 / BCRC 21394 / JCM 1990 / NBRC 0083 / IGC 2968) (Yeast)).